The sequence spans 173 residues: NAD(P)H-quinone oxidoreductase subunit I, chloroplastic (173 aa).

4Fe-4S ferredoxin-type domains are found at residues Gly-55–Asp-84 and Arg-95–Glu-124. Residues Cys-64, Cys-67, Cys-70, Cys-74, Cys-104, Cys-107, Cys-110, and Cys-114 each coordinate [4Fe-4S] cluster.

This sequence belongs to the complex I 23 kDa subunit family. NDH is composed of at least 16 different subunits, 5 of which are encoded in the nucleus. Requires [4Fe-4S] cluster as cofactor.

It localises to the plastid. It is found in the chloroplast thylakoid membrane. The enzyme catalyses a plastoquinone + NADH + (n+1) H(+)(in) = a plastoquinol + NAD(+) + n H(+)(out). The catalysed reaction is a plastoquinone + NADPH + (n+1) H(+)(in) = a plastoquinol + NADP(+) + n H(+)(out). Its function is as follows. NDH shuttles electrons from NAD(P)H:plastoquinone, via FMN and iron-sulfur (Fe-S) centers, to quinones in the photosynthetic chain and possibly in a chloroplast respiratory chain. The immediate electron acceptor for the enzyme in this species is believed to be plastoquinone. Couples the redox reaction to proton translocation, and thus conserves the redox energy in a proton gradient. The chain is NAD(P)H-quinone oxidoreductase subunit I, chloroplastic from Nephroselmis olivacea (Green alga).